Reading from the N-terminus, the 352-residue chain is Ion-translocating oxidoreductase complex subunit D (352 aa).

Helical transmembrane passes span 20-40 (IMLLVLIAALPGVAAQTWFFG), 44-64 (LFQIVLAAVTALFAEAIVLSL), 78-109 (ALLTGLLLAVSIPPLAPWWMIVLGTGFAIIIA), and 123-143 (PAMIGYVVLLISFPVQMTSWL). Position 187 is an FMN phosphoryl threonine (threonine 187). 5 helical membrane passes run 214–234 (VLAGVGWQWVNLAWLVGGVFL), 242–262 (WHIPVSFLVTLALCATLGWLF), 267–287 (LASPQLHLLSGATMLGAFFIL), 301–321 (LIFGALAGVLVWLIRSFGGYP), and 322–342 (DGVAFAVLLANITVPLIDYYT).

It belongs to the NqrB/RnfD family. As to quaternary structure, the complex is composed of six subunits: RsxA, RsxB, RsxC, RsxD, RsxE and RsxG. The cofactor is FMN.

It localises to the cell inner membrane. Part of a membrane-bound complex that couples electron transfer with translocation of ions across the membrane. Required to maintain the reduced state of SoxR. The protein is Ion-translocating oxidoreductase complex subunit D of Salmonella arizonae (strain ATCC BAA-731 / CDC346-86 / RSK2980).